A 120-amino-acid polypeptide reads, in one-letter code: Glycine cleavage system H protein (120 aa).

The region spanning 17 to 99 (IATVGITAHA…RGAGWFFKLK (83 aa)) is the Lipoyl-binding domain. K58 bears the N6-lipoyllysine mark.

Belongs to the GcvH family. As to quaternary structure, the glycine cleavage system is composed of four proteins: P, T, L and H. The cofactor is (R)-lipoate.

The glycine cleavage system catalyzes the degradation of glycine. The H protein shuttles the methylamine group of glycine from the P protein to the T protein. The sequence is that of Glycine cleavage system H protein from Allorhizobium ampelinum (strain ATCC BAA-846 / DSM 112012 / S4) (Agrobacterium vitis (strain S4)).